A 350-amino-acid polypeptide reads, in one-letter code: Biotin synthase (350 aa).

The 228-residue stretch at 41–268 (NEVQISRLLS…KSRVRLSAGR (228 aa)) folds into the Radical SAM core domain. Residues Cys56, Cys60, and Cys63 each contribute to the [4Fe-4S] cluster site. Residues Cys100, Cys131, Cys191, and Arg263 each contribute to the [2Fe-2S] cluster site.

Belongs to the radical SAM superfamily. Biotin synthase family. Homodimer. [4Fe-4S] cluster serves as cofactor. The cofactor is [2Fe-2S] cluster.

The catalysed reaction is (4R,5S)-dethiobiotin + (sulfur carrier)-SH + 2 reduced [2Fe-2S]-[ferredoxin] + 2 S-adenosyl-L-methionine = (sulfur carrier)-H + biotin + 2 5'-deoxyadenosine + 2 L-methionine + 2 oxidized [2Fe-2S]-[ferredoxin]. The protein operates within cofactor biosynthesis; biotin biosynthesis; biotin from 7,8-diaminononanoate: step 2/2. Its function is as follows. Catalyzes the conversion of dethiobiotin (DTB) to biotin by the insertion of a sulfur atom into dethiobiotin via a radical-based mechanism. This Shewanella sp. (strain ANA-3) protein is Biotin synthase.